An 80-amino-acid polypeptide reads, in one-letter code: Venom protein HGE029 (80 aa).

An N-terminal signal peptide occupies residues M1–A22.

The protein belongs to the non-disulfide-bridged peptide (NDBP) superfamily. Long chain multifunctional peptide (group 2) family. As to expression, expressed by the venom gland.

The protein localises to the secreted. The protein is Venom protein HGE029 of Hoffmannihadrurus gertschi (Scorpion).